A 313-amino-acid chain; its full sequence is Proclavaminate amidinohydrolase (313 aa).

Residues His-121, Asp-144, His-146, Asp-148, Asp-235, and Asp-237 each coordinate Mn(2+).

It belongs to the arginase family. As to quaternary structure, homohexamer. Mn(2+) serves as cofactor.

It catalyses the reaction amidinoproclavaminate + H2O = proclavaminate + urea. It functions in the pathway antibiotic biosynthesis; clavulanate biosynthesis; clavulanate from D-glyceraldehyde 3-phosphate and L-arginine: step 4/8. This Streptomyces clavuligerus protein is Proclavaminate amidinohydrolase (pah).